Consider the following 259-residue polypeptide: Hydroxyacylglutathione hydrolase (259 aa).

7 residues coordinate Zn(2+): His56, His58, Asp60, His61, His112, Asp133, and His171.

Belongs to the metallo-beta-lactamase superfamily. Glyoxalase II family. Monomer. It depends on Zn(2+) as a cofactor.

The catalysed reaction is an S-(2-hydroxyacyl)glutathione + H2O = a 2-hydroxy carboxylate + glutathione + H(+). The protein operates within secondary metabolite metabolism; methylglyoxal degradation; (R)-lactate from methylglyoxal: step 2/2. In terms of biological role, thiolesterase that catalyzes the hydrolysis of S-D-lactoyl-glutathione to form glutathione and D-lactic acid. This chain is Hydroxyacylglutathione hydrolase, found in Pseudomonas entomophila (strain L48).